The primary structure comprises 127 residues: Large ribosomal subunit protein bL20 (127 aa).

This sequence belongs to the bacterial ribosomal protein bL20 family.

Its function is as follows. Binds directly to 23S ribosomal RNA and is necessary for the in vitro assembly process of the 50S ribosomal subunit. It is not involved in the protein synthesizing functions of that subunit. This chain is Large ribosomal subunit protein bL20 (rplT), found in Mycoplasma pneumoniae (strain ATCC 29342 / M129 / Subtype 1) (Mycoplasmoides pneumoniae).